Reading from the N-terminus, the 405-residue chain is Beta-citrylglutamate synthase B (405 aa).

Residues 115–300 (FQELAGHGVP…VAGIVADFVL (186 aa)) form the ATP-grasp domain. Residues lysine 154, 189–199 (QEYVKESHGRD), and arginine 215 each bind ATP. Residues aspartate 260, glutamate 273, and asparagine 275 each contribute to the Mg(2+) site. The Mn(2+) site is built by aspartate 260, glutamate 273, and asparagine 275. Residues 359 to 387 (AMSTMSTSSTSSESEADLTETGPTPVGAN) form a disordered region. Low complexity predominate over residues 360–371 (MSTMSTSSTSSE).

Belongs to the RimK family. Mg(2+) is required as a cofactor. It depends on Mn(2+) as a cofactor.

Its subcellular location is the cytoplasm. It catalyses the reaction citrate + L-glutamate + ATP = beta-citrylglutamate + ADP + phosphate + H(+). The catalysed reaction is N-acetyl-L-aspartate + L-glutamate + ATP = N-acetyl-L-aspartyl-L-glutamate + ADP + phosphate + H(+). Its function is as follows. Catalyzes the synthesis of beta-citryl-L-glutamate and N-acetyl-L-aspartyl-L-glutamate. Beta-citryl-L-glutamate is synthesized more efficiently than N-acetyl-L-aspartyl-L-glutamate. The chain is Beta-citrylglutamate synthase B (rimklb) from Danio rerio (Zebrafish).